The sequence spans 256 residues: Isoprenyl transferase 1 (256 aa).

The active site involves aspartate 34. Aspartate 34 lines the Mg(2+) pocket. Residues 35–38 (GNRR), tryptophan 39, histidine 52, and 80–82 (STE) contribute to the substrate site. Asparagine 83 (proton acceptor) is an active-site residue. Substrate contacts are provided by residues arginine 86, arginine 205, and 211-213 (RLS). Residue glutamate 224 participates in Mg(2+) binding.

Belongs to the UPP synthase family. In terms of assembly, homodimer. Requires Mg(2+) as cofactor.

In terms of biological role, catalyzes the condensation of isopentenyl diphosphate (IPP) with allylic pyrophosphates generating different type of terpenoids. The chain is Isoprenyl transferase 1 from Corynebacterium efficiens (strain DSM 44549 / YS-314 / AJ 12310 / JCM 11189 / NBRC 100395).